The primary structure comprises 56 residues: Conotoxin Cal6.41b (56 aa).

The first 23 residues, 1-23 (MSGSGAMLLGLLILVAMATSLDT), serve as a signal peptide directing secretion. Cystine bridges form between Cys27/Cys41, Cys33/Cys50, and Cys40/Cys54.

In terms of tissue distribution, expressed by the venom duct.

The protein localises to the secreted. In terms of biological role, probable neurotoxin. The sequence is that of Conotoxin Cal6.41b from Californiconus californicus (California cone).